We begin with the raw amino-acid sequence, 330 residues long: D-lactate dehydrogenase (330 aa).

Residues 155 to 156 (RI), D175, 206 to 207 (MP), N212, 233 to 235 (MAR), and D259 each bind NAD(+). R235 is an active-site residue. The active site involves E264. The active-site Proton donor is the H296.

The protein belongs to the D-isomer specific 2-hydroxyacid dehydrogenase family.

The enzyme catalyses (R)-lactate + NAD(+) = pyruvate + NADH + H(+). This Streptococcus pyogenes serotype M1 protein is D-lactate dehydrogenase (ldhD).